The primary structure comprises 267 residues: 2-dehydro-3-deoxyphosphooctonate aldolase (267 aa).

It belongs to the KdsA family.

It localises to the cytoplasm. The enzyme catalyses D-arabinose 5-phosphate + phosphoenolpyruvate + H2O = 3-deoxy-alpha-D-manno-2-octulosonate-8-phosphate + phosphate. Its pathway is carbohydrate biosynthesis; 3-deoxy-D-manno-octulosonate biosynthesis; 3-deoxy-D-manno-octulosonate from D-ribulose 5-phosphate: step 2/3. It participates in bacterial outer membrane biogenesis; lipopolysaccharide biosynthesis. In Campylobacter jejuni subsp. doylei (strain ATCC BAA-1458 / RM4099 / 269.97), this protein is 2-dehydro-3-deoxyphosphooctonate aldolase.